We begin with the raw amino-acid sequence, 348 residues long: Cyclin-dependent kinase inhibitor 1C (348 aa).

Arg109 is subject to Omega-N-methylarginine. A disordered region spans residues 115 to 348 (VAVIPRSGPP…VEQTPRKRLR (234 aa)). 2 stretches are compositionally biased toward acidic residues: residues 207 to 220 (QGEE…DELG) and 227 to 274 (QGEE…QDEN). Residues 275-284 (QEQRGQELKD) are compositionally biased toward basic and acidic residues. The Nuclear localization signal motif lies at 309 to 312 (KRKR).

The protein belongs to the CDI family. Interacts with PCNA. As to expression, expressed in the heart, brain, lung, skeletal muscle, kidney, pancreas and testis. High levels are seen in the placenta while low levels are seen in the liver.

Its subcellular location is the nucleus. In terms of biological role, potent tight-binding inhibitor of several G1 cyclin/CDK complexes (cyclin E-CDK2, cyclin D2-CDK4, and cyclin A-CDK2) and, to lesser extent, of the mitotic cyclin B-CDC2. Negative regulator of cell proliferation. May play a role in maintenance of the non-proliferative state throughout life. The chain is Cyclin-dependent kinase inhibitor 1C (Cdkn1c) from Mus musculus (Mouse).